A 188-amino-acid polypeptide reads, in one-letter code: ATP synthase subunit delta (188 aa).

This sequence belongs to the ATPase delta chain family. In terms of assembly, F-type ATPases have 2 components, F(1) - the catalytic core - and F(0) - the membrane proton channel. F(1) has five subunits: alpha(3), beta(3), gamma(1), delta(1), epsilon(1). F(0) has three main subunits: a(1), b(2) and c(10-14). The alpha and beta chains form an alternating ring which encloses part of the gamma chain. F(1) is attached to F(0) by a central stalk formed by the gamma and epsilon chains, while a peripheral stalk is formed by the delta and b chains.

It localises to the cell membrane. Functionally, f(1)F(0) ATP synthase produces ATP from ADP in the presence of a proton or sodium gradient. F-type ATPases consist of two structural domains, F(1) containing the extramembraneous catalytic core and F(0) containing the membrane proton channel, linked together by a central stalk and a peripheral stalk. During catalysis, ATP synthesis in the catalytic domain of F(1) is coupled via a rotary mechanism of the central stalk subunits to proton translocation. In terms of biological role, this protein is part of the stalk that links CF(0) to CF(1). It either transmits conformational changes from CF(0) to CF(1) or is implicated in proton conduction. The sequence is that of ATP synthase subunit delta from Malacoplasma penetrans (strain HF-2) (Mycoplasma penetrans).